The chain runs to 347 residues: Phenylalanine--tRNA ligase alpha subunit (347 aa).

Residue glutamate 261 coordinates Mg(2+).

The protein belongs to the class-II aminoacyl-tRNA synthetase family. Phe-tRNA synthetase alpha subunit type 1 subfamily. Tetramer of two alpha and two beta subunits. The cofactor is Mg(2+).

It is found in the cytoplasm. It catalyses the reaction tRNA(Phe) + L-phenylalanine + ATP = L-phenylalanyl-tRNA(Phe) + AMP + diphosphate + H(+). The chain is Phenylalanine--tRNA ligase alpha subunit from Streptococcus pyogenes serotype M1.